We begin with the raw amino-acid sequence, 434 residues long: Serine/threonine-protein kinase Sgk1-B (434 aa).

The interval 68-94 (ESELLNENSSPPPSHSQQINLGPSSNP) is disordered. The Protein kinase domain maps to 101 to 358 (FQFLKIIGKG…FMEIKNHIFF (258 aa)). Residues 107-115 (IGKGSFGKV) and K130 contribute to the ATP site. The active-site Proton acceptor is the D225. Positions 359 to 434 (SPIDWDDLIN…SYAPPMDSYL (76 aa)) constitute an AGC-kinase C-terminal domain.

The protein belongs to the protein kinase superfamily. AGC Ser/Thr protein kinase family.

It is found in the cytoplasm. The protein localises to the nucleus. The protein resides in the endoplasmic reticulum. The catalysed reaction is L-seryl-[protein] + ATP = O-phospho-L-seryl-[protein] + ADP + H(+). The enzyme catalyses L-threonyl-[protein] + ATP = O-phospho-L-threonyl-[protein] + ADP + H(+). Its function is as follows. Protein kinase that may play an important role in cellular stress response. Plays an important role in activating certain potassium, sodium, and chloride channels, suggesting an involvement in the regulation of processes such as cell survival, neuronal excitability and renal sodium excretion. This is Serine/threonine-protein kinase Sgk1-B (sgk1-b) from Xenopus laevis (African clawed frog).